The following is a 216-amino-acid chain: 3-keto-L-gulonate-6-phosphate decarboxylase UlaD (216 aa).

A substrate-binding site is contributed by Asp-11. Residues Glu-33 and Asp-62 each coordinate Mg(2+). Position 192 (Arg-192) interacts with substrate.

It belongs to the HPS/KGPDC family. KGPDC subfamily. As to quaternary structure, homodimer. Mg(2+) serves as cofactor.

The enzyme catalyses 3-dehydro-L-gulonate 6-phosphate + H(+) = L-xylulose 5-phosphate + CO2. Its pathway is cofactor degradation; L-ascorbate degradation; D-xylulose 5-phosphate from L-ascorbate: step 2/4. Functionally, catalyzes the decarboxylation of 3-keto-L-gulonate-6-P into L-xylulose-5-P. Is involved in the anaerobic L-ascorbate utilization. The sequence is that of 3-keto-L-gulonate-6-phosphate decarboxylase UlaD from Shigella boydii serotype 18 (strain CDC 3083-94 / BS512).